The chain runs to 344 residues: MTDCWYIPEAVADRRDENRLSPNVPASYEVLGEAGIFYRHFDSEEVNDNIEGFIQPLLKKLNYQSYDVVNLSPANLGAEKFETLAEQHFMEHIHEDDEVRLILEGQGYFDVRDINDKWIRLLLKPGDCIVVPAGMYHRFTTDQSKCIKTLRIFKEAPQWIALNRGPEAEEKPARKEYLARLHAPAETAVGAVNGRTIFSLRYPLKLDAELTVITKRLLEQHSKQPLALAIYLTGSTDPTTGESWCPDCVLAKLHVARRFAELQGTYGKEHAIFLQLPVERASYLGNPNFFYRTHPILQLASVPTLLVLSPAKDAKEGGDVQWYDLLDVKVRTCDVDRTDVLNLE.

The Fe(2+) site is built by H92, H94, E98, and H137. Residues H92, H94, E98, and H137 each coordinate Ni(2+).

It belongs to the acireductone dioxygenase (ARD) family. It depends on Fe(2+) as a cofactor. Ni(2+) is required as a cofactor.

The protein localises to the cytoplasm. Its subcellular location is the nucleus. It carries out the reaction 1,2-dihydroxy-5-(methylsulfanyl)pent-1-en-3-one + O2 = 4-methylsulfanyl-2-oxobutanoate + formate + 2 H(+). The catalysed reaction is 1,2-dihydroxy-5-(methylsulfanyl)pent-1-en-3-one + O2 = 3-(methylsulfanyl)propanoate + CO + formate + 2 H(+). It functions in the pathway amino-acid biosynthesis; L-methionine biosynthesis via salvage pathway; L-methionine from S-methyl-5-thio-alpha-D-ribose 1-phosphate: step 5/6. Functionally, catalyzes 2 different reactions between oxygen and the acireductone 1,2-dihydroxy-3-keto-5-methylthiopentene (DHK-MTPene) depending upon the metal bound in the active site. Fe-containing acireductone dioxygenase (Fe-ARD) produces formate and 2-keto-4-methylthiobutyrate (KMTB), the alpha-ketoacid precursor of methionine in the methionine recycle pathway. Ni-containing acireductone dioxygenase (Ni-ARD) produces methylthiopropionate, carbon monoxide and formate, and does not lie on the methionine recycle pathway. This is Acireductone dioxygenase from Leishmania major.